The primary structure comprises 841 residues: GRIP1-associated protein 1 (841 aa).

Ala-2 is subject to N-acetylalanine. 2 coiled-coil regions span residues 4 to 161 (ALSE…YGKE) and 208 to 641 (EQLQ…NSKS). 2 disordered regions span residues 532–551 (AEES…KQCR) and 558–580 (LKGK…EERD). Phosphoserine is present on residues Ser-655, Ser-666, Ser-668, Ser-669, Ser-688, Ser-690, Ser-691, and Ser-692. The interval 681–706 (SSAVPARSLSSSPQAQPPRPAELSDE) is disordered. The span at 682–694 (SAVPARSLSSSPQ) shows a compositional bias: low complexity. Coiled coils occupy residues 701-735 (AELS…LEVS) and 785-814 (DENL…KDME).

Interacts with GRIP1, GRIP2 and AMPA receptors. Interacts (via C-terminus) with MAPK8/JNK1 and MAP3K1/MEKK1; the interaction promotes MAP3K1-mediated phosphorylation of MAPK8. Interacts (via N-terminus) with RAB4A (in GTP-bound form). Interacts (via C-terminus) with STX12. In terms of processing, proteolytically cleaved by caspase-3. A minor C-terminal proteolytic fragment of 30 kDa is produced. Proteolytic cleavage is required for JNK signaling activation.

It is found in the early endosome membrane. The protein localises to the recycling endosome membrane. It localises to the cell projection. The protein resides in the axon. Its subcellular location is the dendrite. It is found in the synapse. Functionally, regulates the endosomal recycling back to the neuronal plasma membrane, possibly by connecting early and late recycling endosomal domains and promoting segregation of recycling endosomes from early endosomal membranes. Involved in the localization of recycling endosomes to dendritic spines, thereby playing a role in the maintenance of dendritic spine morphology. Required for the activity-induced AMPA receptor recycling to dendrite membranes and for long-term potentiation and synaptic plasticity. Functions as a scaffold protein to facilitate MAP3K1/MEKK1-mediated activation of the JNK1 kinase by phosphorylation, possibly by bringing MAP3K1/MEKK1 and JNK1 in close proximity. In Homo sapiens (Human), this protein is GRIP1-associated protein 1.